Reading from the N-terminus, the 122-residue chain is Large ribosomal subunit protein uL14 (122 aa).

The protein belongs to the universal ribosomal protein uL14 family. As to quaternary structure, part of the 50S ribosomal subunit. Forms a cluster with proteins L3 and L19. In the 70S ribosome, L14 and L19 interact and together make contacts with the 16S rRNA in bridges B5 and B8.

In terms of biological role, binds to 23S rRNA. Forms part of two intersubunit bridges in the 70S ribosome. This Macrococcus caseolyticus (strain JCSC5402) (Macrococcoides caseolyticum) protein is Large ribosomal subunit protein uL14.